The primary structure comprises 833 residues: Leucine--tRNA ligase (833 aa).

The 'HIGH' region signature appears at 41–52; that stretch reads PYPSGAGLHVGH. The short motif at 610–614 is the 'KMSKS' region element; that stretch reads KMSKS. K613 is a binding site for ATP.

It belongs to the class-I aminoacyl-tRNA synthetase family.

It localises to the cytoplasm. The catalysed reaction is tRNA(Leu) + L-leucine + ATP = L-leucyl-tRNA(Leu) + AMP + diphosphate. This Streptococcus pyogenes serotype M5 (strain Manfredo) protein is Leucine--tRNA ligase.